Reading from the N-terminus, the 497-residue chain is uncharacterized protein (497 aa).

Residues 1–16 show a composition bias toward polar residues; the sequence is MSTTTETVTWSQYKPQ. A disordered region spans residues 1–29; the sequence is MSTTTETVTWSQYKPQETQRRLSRSSTIT. The residue at position 64 (Ser64) is a Phosphoserine. Transmembrane regions (helical) follow at residues 86 to 106, 120 to 140, 155 to 175, 180 to 200, 222 to 242, and 258 to 278; these read IALVLLNNLMSEMSLTIALPI, FSGLVIGIPTMISLVCLYPML, FRPLIVSCISQIIGHLLYSLA, WLYLILIGRMCSGVGFTMFLY, LNILAQILGSMAGAFLGGILA, and AGSWFMLFIWIVYSIFLSIFF. Ser295 carries the post-translational modification Phosphoserine. Transmembrane regions (helical) follow at residues 309–329, 348–368, 377–397, 407–427, 443–463, and 468–488; these read FMLCFLSMAAFISIFNVAGYQ, GNFLSLSSLVIAPFVFFSTFL, IMLYGFMMGIVALIVHLVLDA, FVLYSIMQFGFSVGSAPLVSL, VVQVGISIGETVGSICGGAIF, and VGFIAMNLGIALLVFIQLLYL.

It localises to the membrane. This is an uncharacterized protein from Schizosaccharomyces pombe (strain 972 / ATCC 24843) (Fission yeast).